Here is a 71-residue protein sequence, read N- to C-terminus: Protein CYSTEINE-RICH TRANSMEMBRANE MODULE 8 (71 aa).

Positions 1–22 are enriched in polar residues; the sequence is MNQSAQNYFSVQKPSETSSGPY. Positions 1–35 are disordered; that stretch reads MNQSAQNYFSVQKPSETSSGPYTSPPPIGYPTRDA. The chain crosses the membrane as a helical span at residues 48 to 64; it reads NSKGVNPEGCCAAICCC.

This sequence belongs to the CYSTM1 family. As to expression, mostly expressed in stems, siliques, roots and flowers and, to a lower extent, in leaves.

The protein resides in the membrane. It localises to the nucleus. In terms of biological role, involved in resistance to abiotic stress. The protein is Protein CYSTEINE-RICH TRANSMEMBRANE MODULE 8 of Arabidopsis thaliana (Mouse-ear cress).